Consider the following 1347-residue polypeptide: MARQPPPPWVHAAFLLCLLSLGGAIEIPMDPSIQNELTQPPTITKQSAKDHIVDPRDNILIECEAKGNPAPSFHWTRNSRFFNIAKDPRVSMRRRSGTLVIDFRSGGRPEEYEGEYQCFARNKFGTALSNRIRLQVSKSPLWPKENLDPVVVQEGAPLTLQCNPPPGLPSPVIFWMSSSMEPITQDKRVSQGHNGDLYFSNVMLQDMQTDYSCNARFHFTHTIQQKNPFTLKVLTTRGVAERTPSFMYPQGTASSQMVLRGMDLLLECIASGVPTPDIAWYKKGGDLPSDKAKFENFNKALRITNVSEEDSGEYFCLASNKMGSIRHTISVRVKAAPYWLDEPKNLILAPGEDGRLVCRANGNPKPTVQWMVNGEPLQSAPPNPNREVAGDTIIFRDTQISSRAVYQCNTSNEHGYLLANAFVSVLDVPPRMLSPRNQLIRVILYNRTRLDCPFFGSPIPTLRWFKNGQGSNLDGGNYHVYENGSLEIKMIRKEDQGIYTCVATNILGKAENQVRLEVKDPTRIYRMPEDQVARRGTTVQLECRVKHDPSLKLTVSWLKDDEPLYIGNRMKKEDDSLTIFGVAERDQGSYTCVASTELDQDLAKAYLTVLADQATPTNRLAALPKGRPDRPRDLELTDLAERSVRLTWIPGDANNSPITDYVVQFEEDQFQPGVWHDHSKYPGSVNSAVLRLSPYVNYQFRVIAINEVGSSHPSLPSERYRTSGAPPESNPGDVKGEGTRKNNMEITWTPMNATSAFGPNLRYIVKWRRRETREAWNNVTVWGSRYVVGQTPVYVPYEIRVQAENDFGKGPEPESVIGYSGEDYPRAAPTEVKVRVMNSTAISLQWNRVYSDTVQGQLREYRAYYWRESSLLKNLWVSQKRQQASFPGDRLRGVVSRLFPYSNYKLEMVVVNGRGDGPRSETKEFTTPEGVPSAPRRFRVRQPNLETINLEWDHPEHPNGIMIGYTLKYVAFNGTKVGKQIVENFSPNQTKFTVQRTDPVSRYRFTLSARTQVGSGEAVTEESPAPPNEATPTAAPPTLPPTTVGATGAVSSTDATAIAATTEATTVPIIPTVAPTTIATTTTVATTTTTTAAATTTTESPPTTTSGTKIHESAPDEQSIWNVTVLPNSKWANITWKHNFGPGTDFVVEYIDSNHTKKTVPVKAQAQPIQLTDLYPGMTYTLRVYSRDNEGISSTVITFMTSTAYTNNQADIATQGWFIGLMCAIALLVLILLIVCFIKRSRGGKYPVREKKDVPLGPEDPKEEDGSFDYSDEDNKPLQGSQTSLDGTIKQQESDDSLVDYGEGGEGQFNEDGSFIGQYTVKKDKEETEGNESSEATSPVNAIYSLA.

An N-terminal signal peptide occupies residues 1–24 (MARQPPPPWVHAAFLLCLLSLGGA). Residues 25-1217 (IEIPMDPSIQ…NQADIATQGW (1193 aa)) lie on the Extracellular side of the membrane. Ig-like C2-type domains lie at 41–137 (PTIT…LQVS), 143–230 (PKEN…NPFT), 244–332 (PSFM…ISVR), 337–424 (PYWL…AFVS), 429–517 (PPRM…VRLE), and 521–603 (PTRI…QDLA). 4 disulfides stabilise this stretch: C63–C118, C162–C213, C268–C316, and C358–C408. A glycan (N-linked (GlcNAc...) asparagine) is linked at N305. 2 N-linked (GlcNAc...) asparagine glycosylation sites follow: N409 and N446. 2 disulfide bridges follow: C452/C501 and C543/C592. Residue Y481 is modified to Phosphotyrosine. Residue N483 is glycosylated (N-linked (GlcNAc...) asparagine). At S485 the chain carries Phosphoserine. 4 Fibronectin type-III domains span residues 630 to 725 (RPRD…TSGA), 730 to 823 (NPGD…SGED), 828 to 930 (APTE…TPEG), and 934 to 1030 (APRR…PNEA). The interval 713 to 740 (PSLPSERYRTSGAPPESNPGDVKGEGTR) is disordered. N-linked (GlcNAc...) asparagine glycans are attached at residues N752 and N778. The segment at 915-934 (GDGPRSETKEFTTPEGVPSA) is disordered. Basic and acidic residues predominate over residues 916–926 (DGPRSETKEFT). N973 and N988 each carry an N-linked (GlcNAc...) asparagine glycan. Disordered regions lie at residues 1011-1040 (TQVG…PTLP) and 1090-1111 (TTAA…TKIH). The span at 1024 to 1040 (PAPPNEATPTAAPPTLP) shows a compositional bias: pro residues. The segment covering 1090-1105 (TTAAATTTTESPPTTT) has biased composition (low complexity). Residues 1114 to 1206 (APDEQSIWNV…ITFMTSTAYT (93 aa)) form the Fibronectin type-III 5 domain. Residues 1218–1238 (FIGLMCAIALLVLILLIVCFI) traverse the membrane as a helical segment. Residues 1239 to 1347 (KRSRGGKYPV…SPVNAIYSLA (109 aa)) are Cytoplasmic-facing. Residues 1248–1347 (VREKKDVPLG…SPVNAIYSLA (100 aa)) form a disordered region. Residues 1261 to 1272 (PKEEDGSFDYSD) are compositionally biased toward acidic residues. Phosphoserine is present on residues S1267, S1281, S1294, S1297, S1333, S1334, and S1338. A compositionally biased stretch (polar residues) spans 1278–1291 (LQGSQTSLDGTIKQ).

The protein belongs to the immunoglobulin superfamily. L1/neurofascin/NgCAM family. Horseshoe-shaped homodimer. Probable constituent of a NFASC/NRCAM/ankyrin-G complex. Associates with the sodium channel beta-1 (SCN1B) and beta-3 (SCN3B) subunits. Interacts with GLDN/gliomedin. Interacts with MYOC.

It localises to the cell membrane. It is found in the cell junction. The protein resides in the paranodal septate junction. In terms of biological role, cell adhesion, ankyrin-binding protein which may be involved in neurite extension, axonal guidance, synaptogenesis, myelination and neuron-glial cell interactions. In Homo sapiens (Human), this protein is Neurofascin (NFASC).